We begin with the raw amino-acid sequence, 168 residues long: Large ribosomal subunit protein uL10 (168 aa).

This sequence belongs to the universal ribosomal protein uL10 family. In terms of assembly, part of the ribosomal stalk of the 50S ribosomal subunit. The N-terminus interacts with L11 and the large rRNA to form the base of the stalk. The C-terminus forms an elongated spine to which L12 dimers bind in a sequential fashion forming a multimeric L10(L12)X complex.

Functionally, forms part of the ribosomal stalk, playing a central role in the interaction of the ribosome with GTP-bound translation factors. This chain is Large ribosomal subunit protein uL10 (rplJ), found in Mycoplasmopsis pulmonis (strain UAB CTIP) (Mycoplasma pulmonis).